A 287-amino-acid chain; its full sequence is Large ribosomal subunit protein uL2 (287 aa).

The interval 222–266 (RGIRPTVRGSAMNPNDHPHGGGEGRSPVGRDAPRTPWGKRHMGVK) is disordered.

It belongs to the universal ribosomal protein uL2 family. In terms of assembly, part of the 50S ribosomal subunit. Forms a bridge to the 30S subunit in the 70S ribosome.

One of the primary rRNA binding proteins. Required for association of the 30S and 50S subunits to form the 70S ribosome, for tRNA binding and peptide bond formation. It has been suggested to have peptidyltransferase activity; this is somewhat controversial. Makes several contacts with the 16S rRNA in the 70S ribosome. In Mycoplasma pneumoniae (strain ATCC 29342 / M129 / Subtype 1) (Mycoplasmoides pneumoniae), this protein is Large ribosomal subunit protein uL2.